A 627-amino-acid chain; its full sequence is DNA mismatch repair protein MutL (627 aa).

The interval 376-404 (APASTNEVREGSAARAGNYQPPEPPSREA) is disordered.

It belongs to the DNA mismatch repair MutL/HexB family.

In terms of biological role, this protein is involved in the repair of mismatches in DNA. It is required for dam-dependent methyl-directed DNA mismatch repair. May act as a 'molecular matchmaker', a protein that promotes the formation of a stable complex between two or more DNA-binding proteins in an ATP-dependent manner without itself being part of a final effector complex. The chain is DNA mismatch repair protein MutL from Aeromonas salmonicida (strain A449).